The sequence spans 263 residues: Orotidine 5'-phosphate decarboxylase (263 aa).

Substrate is bound by residues D36, 58 to 60 (KTH), 90 to 99 (DRKFADIGNT), Y216, and R234. The Proton donor role is filled by K92.

The protein belongs to the OMP decarboxylase family.

It catalyses the reaction orotidine 5'-phosphate + H(+) = UMP + CO2. The protein operates within pyrimidine metabolism; UMP biosynthesis via de novo pathway; UMP from orotate: step 2/2. In Komagataella pastoris (Yeast), this protein is Orotidine 5'-phosphate decarboxylase (URA3).